The chain runs to 390 residues: Glutamyl-tRNA reductase (390 aa).

Residues 46-49 (TCNR), serine 96, 101-103 (EAQ), and glutamine 107 each bind substrate. Cysteine 47 (nucleophile) is an active-site residue. 176-181 (GAGEMA) is a binding site for NADP(+).

This sequence belongs to the glutamyl-tRNA reductase family. Homodimer.

The enzyme catalyses (S)-4-amino-5-oxopentanoate + tRNA(Glu) + NADP(+) = L-glutamyl-tRNA(Glu) + NADPH + H(+). It functions in the pathway porphyrin-containing compound metabolism; protoporphyrin-IX biosynthesis; 5-aminolevulinate from L-glutamyl-tRNA(Glu): step 1/2. In terms of biological role, catalyzes the NADPH-dependent reduction of glutamyl-tRNA(Glu) to glutamate 1-semialdehyde (GSA). In Thermus thermophilus (strain ATCC BAA-163 / DSM 7039 / HB27), this protein is Glutamyl-tRNA reductase.